A 551-amino-acid polypeptide reads, in one-letter code: Membrane protein insertase YidC (551 aa).

A helical membrane pass occupies residues 3–23 (ANHIRILLLVTIAIMFISLMG). Positions 33–47 (NTKQQTSATQNNSHY) are enriched in polar residues. The disordered stretch occupies residues 33 to 59 (NTKQQTSATQNNSHYDNADSSTNTDVT). The span at 50–59 (ADSSTNTDVT) shows a compositional bias: low complexity. A run of 3 helical transmembrane segments spans residues 361–381 (LVGN…LIFY), 431–451 (LSGC…YWVL), and 504–524 (VMMF…SGLV).

Belongs to the OXA1/ALB3/YidC family. Type 1 subfamily. As to quaternary structure, interacts with the Sec translocase complex via SecD. Specifically interacts with transmembrane segments of nascent integral membrane proteins during membrane integration.

It is found in the cell inner membrane. In terms of biological role, required for the insertion and/or proper folding and/or complex formation of integral membrane proteins into the membrane. Involved in integration of membrane proteins that insert both dependently and independently of the Sec translocase complex, as well as at least some lipoproteins. Aids folding of multispanning membrane proteins. This chain is Membrane protein insertase YidC, found in Francisella tularensis subsp. mediasiatica (strain FSC147).